The sequence spans 312 residues: Aspartate carbamoyltransferase catalytic subunit (312 aa).

2 residues coordinate carbamoyl phosphate: arginine 54 and threonine 55. Lysine 83 serves as a coordination point for L-aspartate. Positions 104, 132, and 135 each coordinate carbamoyl phosphate. The L-aspartate site is built by arginine 165 and arginine 226. Carbamoyl phosphate-binding residues include leucine 263 and proline 264.

It belongs to the aspartate/ornithine carbamoyltransferase superfamily. ATCase family. Heterooligomer of catalytic and regulatory chains.

The catalysed reaction is carbamoyl phosphate + L-aspartate = N-carbamoyl-L-aspartate + phosphate + H(+). The protein operates within pyrimidine metabolism; UMP biosynthesis via de novo pathway; (S)-dihydroorotate from bicarbonate: step 2/3. Its function is as follows. Catalyzes the condensation of carbamoyl phosphate and aspartate to form carbamoyl aspartate and inorganic phosphate, the committed step in the de novo pyrimidine nucleotide biosynthesis pathway. The protein is Aspartate carbamoyltransferase catalytic subunit of Methanothermobacter thermautotrophicus (strain ATCC 29096 / DSM 1053 / JCM 10044 / NBRC 100330 / Delta H) (Methanobacterium thermoautotrophicum).